The following is a 458-amino-acid chain: Argininosuccinate lyase (458 aa).

The protein belongs to the lyase 1 family. Argininosuccinate lyase subfamily.

It localises to the cytoplasm. The enzyme catalyses 2-(N(omega)-L-arginino)succinate = fumarate + L-arginine. The protein operates within amino-acid biosynthesis; L-arginine biosynthesis; L-arginine from L-ornithine and carbamoyl phosphate: step 3/3. The chain is Argininosuccinate lyase from Hydrogenobaculum sp. (strain Y04AAS1).